The primary structure comprises 236 residues: Elastase-1 (236 aa).

The Peptidase S1 domain occupies 1-236 (VVGGRVAQPN…AYISWMNGIM (236 aa)). A disulfide bond links cysteine 30 and cysteine 46. The active-site Charge relay system is the histidine 45. Residues glutamate 59, asparagine 61, threonine 64, glutamate 66, and glutamate 69 each contribute to the Ca(2+) site. Aspartate 93 functions as the Charge relay system in the catalytic mechanism. 3 disulfides stabilise this stretch: cysteine 127-cysteine 193, cysteine 158-cysteine 174, and cysteine 183-cysteine 213. The active-site Charge relay system is serine 187.

Belongs to the peptidase S1 family. Elastase subfamily. Ca(2+) is required as a cofactor. In terms of tissue distribution, pancreas.

The protein localises to the secreted. The enzyme catalyses Hydrolysis of proteins, including elastin. Preferential cleavage: Ala-|-Xaa.. In terms of biological role, acts upon elastin. The polypeptide is Elastase-1 (Salmo salar (Atlantic salmon)).